The chain runs to 328 residues: Arabinose 5-phosphate isomerase KdsD (328 aa).

One can recognise an SIS domain in the interval 42–184 (CEKMFWCKGK…AVALLKARGF (143 aa)). Substrate-binding positions include 75–76 (GT), His-82, His-88, 114–123 (ALIPVLKRLH), 148–150 (KVA), Thr-222, and Asp-275. Zn(2+) is bound at residue His-82. Residues 210–268 (MHTGDEIPHVKKTASLRDALLEVTRKNLGMTVICDDNMMIEGIFTDGDLRRVFDMGVDV) enclose the CBS 1 domain. The 52-residue stretch at 277 to 328 (MTPGGIRVRPGILAVEALNLMQSRHITSVMVADGDHLLGVLHMHDLLRAGVV) folds into the CBS 2 domain.

It belongs to the SIS family. GutQ/KpsF subfamily. As to quaternary structure, homotetramer.

The catalysed reaction is D-arabinose 5-phosphate = D-ribulose 5-phosphate. Its pathway is carbohydrate biosynthesis; 3-deoxy-D-manno-octulosonate biosynthesis; 3-deoxy-D-manno-octulosonate from D-ribulose 5-phosphate: step 1/3. The protein operates within bacterial outer membrane biogenesis; lipopolysaccharide biosynthesis. Its function is as follows. Involved in the biosynthesis of 3-deoxy-D-manno-octulosonate (KDO), a unique 8-carbon sugar component of lipopolysaccharides (LPSs). Catalyzes the reversible aldol-ketol isomerization between D-ribulose 5-phosphate (Ru5P) and D-arabinose 5-phosphate (A5P). The protein is Arabinose 5-phosphate isomerase KdsD (kdsD) of Shigella flexneri.